We begin with the raw amino-acid sequence, 425 residues long: Probable isoprenylcysteine alpha-carbonyl methylesterase ICMEL1 (425 aa).

Basic and acidic residues predominate over residues 1–10 (MQVELADRAA). Residues 1–42 (MQVELADRAAARPSETGEAPPSSPAAAAAASAAAEDAPLLPG) are disordered. Residues 24–34 (PAAAAAASAAA) are compositionally biased toward low complexity. Helical transmembrane passes span 99 to 119 (FLAL…VVYY) and 154 to 174 (VVAF…GALL). Residues 160-162 (GGA) and 231-233 (QSA) each bind substrate. Active-site residues include Ser232, Asp334, and His366.

This sequence belongs to the AB hydrolase superfamily. Isoprenylcysteine methylesterase family.

It is found in the endoplasmic reticulum membrane. The protein localises to the golgi apparatus membrane. It catalyses the reaction [protein]-C-terminal S-[(2E,6E)-farnesyl]-L-cysteine methyl ester + H2O = [protein]-C-terminal S-[(2E,6E)-farnesyl]-L-cysteine + methanol + H(+). Its function is as follows. Catalyzes the demethylation of isoprenylcysteine methylesters. This is Probable isoprenylcysteine alpha-carbonyl methylesterase ICMEL1 (IMCEL1) from Oryza sativa subsp. japonica (Rice).